Reading from the N-terminus, the 434-residue chain is Salicylate hydroxylase (434 aa).

Residue 9 to 38 coordinates FAD; that stretch reads RIGIVGGGISGVALALELCRYSHIQVQLFE.

In terms of assembly, monomer. Requires FAD as cofactor.

It carries out the reaction salicylate + NADH + O2 + 2 H(+) = catechol + CO2 + NAD(+) + H2O. It functions in the pathway aromatic compound metabolism; naphthalene degradation. This chain is Salicylate hydroxylase (nahG), found in Pseudomonas putida (Arthrobacter siderocapsulatus).